Here is a 258-residue protein sequence, read N- to C-terminus: Indole-3-glycerol phosphate synthase (258 aa).

Belongs to the TrpC family.

It catalyses the reaction 1-(2-carboxyphenylamino)-1-deoxy-D-ribulose 5-phosphate + H(+) = (1S,2R)-1-C-(indol-3-yl)glycerol 3-phosphate + CO2 + H2O. It functions in the pathway amino-acid biosynthesis; L-tryptophan biosynthesis; L-tryptophan from chorismate: step 4/5. This is Indole-3-glycerol phosphate synthase from Legionella pneumophila (strain Paris).